A 191-amino-acid polypeptide reads, in one-letter code: Inosine triphosphate pyrophosphatase (191 aa).

Residue 15-20 (TGNANK) participates in ITP binding. Glutamate 43 lines the Mg(2+) pocket. Residues lysine 55, 71-72 (DT), lysine 88, 147-150 (FGWD), lysine 168, and 173-174 (HR) each bind ITP.

Belongs to the HAM1 NTPase family. In terms of assembly, homodimer. It depends on Mg(2+) as a cofactor. The cofactor is Mn(2+).

The protein resides in the cytoplasm. It is found in the nucleus. It carries out the reaction ITP + H2O = IMP + diphosphate + H(+). The catalysed reaction is dITP + H2O = dIMP + diphosphate + H(+). The enzyme catalyses XTP + H2O = XMP + diphosphate + H(+). Its function is as follows. Pyrophosphatase that hydrolyzes non-canonical purine nucleotides such as inosine triphosphate (ITP), deoxyinosine triphosphate (dITP) or xanthosine 5'-triphosphate (XTP) to their respective monophosphate derivatives. The enzyme does not distinguish between the deoxy- and ribose forms. Probably excludes non-canonical purines from RNA and DNA precursor pools, thus preventing their incorporation into RNA and DNA and avoiding chromosomal lesions. The polypeptide is Inosine triphosphate pyrophosphatase (Neurospora crassa (strain ATCC 24698 / 74-OR23-1A / CBS 708.71 / DSM 1257 / FGSC 987)).